The following is a 765-amino-acid chain: Proton-coupled zinc antiporter SLC30A5 (765 aa).

An N-acetylmethionine modification is found at Met-1. Over 1 to 32 (MEEKYGGDVLAGPGGGGGLGPVDVPSARLTKY) the chain is Cytoplasmic. Residues 33–53 (IVLLCFTKFLKAVGLFESYDL) traverse the membrane as a helical segment. Topologically, residues 54 to 56 (LKA) are lumenal. The helical transmembrane segment at 57–77 (VHIVQFIFILKLGTAFFMVLF) threads the bilayer. Over 78–98 (QKPFSSGKTITKHQWIKIFKH) the chain is Cytoplasmic. Residues 99–119 (AVAGCIISLLWFFGLTLCGPL) traverse the membrane as a helical segment. Arg-120 is a topological domain (lumenal). The chain crosses the membrane as a helical span at residues 121–141 (TLLLFEHSDIVVISLLSVLFT). Over 142–152 (SSGGGPAKTRG) the chain is Cytoplasmic. Residues 153–173 (AAFFIIAVICLLLFDNDDLMA) form a helical membrane-spanning segment. Over 174-193 (KMAEHPEGHHDSALTHMLYT) the chain is Lumenal. The chain crosses the membrane as a helical span at residues 194-214 (AIAFLGVADHKGGVLLLVLAL). Topologically, residues 215–238 (CCKVGFHTASRKLSVDVGGAKRLQ) are cytoplasmic. Residues 239–259 (ALSHLVSVLLLCPWVIVLSVT) traverse the membrane as a helical segment. Topologically, residues 260-267 (TESKVESW) are lumenal. A helical transmembrane segment spans residues 268-288 (FSLIMPFATVIFFVMILDFYV). Residues 289 to 303 (DSICSVKMEVSKCAR) lie on the Cytoplasmic side of the membrane. Residues 304-324 (YGSFPIFISALLFGNFWTHPI) traverse the membrane as a helical segment. Over 325-342 (TDQLRAMNKAAHQESTEH) the chain is Lumenal. A helical membrane pass occupies residues 343–363 (VLSGGVVVSAIFFILSANILS). Residues 364 to 418 (SPSKRGQKGTLIGYSPEGTPLYNFMGDAFQHSSQSIPRFIKESLKQILEESDSRQ) are Cytoplasmic-facing. A helical transmembrane segment spans residues 419–439 (IFYFLCLNLLFTFVELFYGVL). The segment at 420–640 (FYFLCLNLLF…ILIFLSVVPL (221 aa)) is mediates homodimerization with SLC30A6. Residues 440–448 (TNSLGLISD) are Lumenal-facing. A helical membrane pass occupies residues 449–469 (GFHMLFDCSALVMGLFAALMS). The Zn(2+) site is built by His-451 and Asp-455. Residues 470–483 (RWKATRIFSYGYGR) are Cytoplasmic-facing. The helical transmembrane segment at 484-504 (IEILSGFINGLFLIVIAFFVF) threads the bilayer. Over 505-520 (MESVARLIDPPELDTH) the chain is Lumenal. The helical transmembrane segment at 521 to 541 (MLTPVSVGGLIVNLIGICAFS) threads the bilayer. A his-rich loop; required for zinc transport region spans residues 542-578 (HAHSHAHGASQGSCHSSDHSHSHHMHGHSDHGHGHSH). Over 542–592 (HAHSHAHGASQGSCHSSDHSHSHHMHGHSDHGHGHSHGSAGGGMNANMRGV) the chain is Cytoplasmic. The tract at residues 551-581 (SQGSCHSSDHSHSHHMHGHSDHGHGHSHGSA) is disordered. Residues 593–613 (FLHVLADTLGSIGVIVSTVLI) form a helical membrane-spanning segment. The Zn(2+) site is built by His-595 and Asp-599. Residues 614–617 (EQFG) lie on the Lumenal side of the membrane. A helical transmembrane segment spans residues 618–638 (WFIADPLCSLFIAILIFLSVV). Residues 639–765 (PLIKDACQVL…KYCKDGTYIM (127 aa)) lie on the Cytoplasmic side of the membrane.

The protein belongs to the cation diffusion facilitator (CDF) transporter (TC 2.A.4) family. SLC30A subfamily. In terms of assembly, heterodimer with SLC30A6/ZNT6; form a functional zinc ion transmembrane transporter. Post-translationally, could homodimerize through the formation of dityrosine bonds upon oxidative stress. Ubiquitously expressed. Highly expressed in pancreas, liver and kidney. Expressed abundantly in insulin-containing beta cells, undetectable in other endocrine cell types including glucagon-secreting alpha cells and most acinar cells (at protein level).

The protein resides in the golgi apparatus. Its subcellular location is the golgi stack membrane. It is found in the cytoplasmic vesicle. The protein localises to the COPII-coated vesicle membrane. It localises to the secretory vesicle membrane. The protein resides in the trans-Golgi network membrane. Its subcellular location is the endoplasmic reticulum membrane. It is found in the cell membrane. The protein localises to the apical cell membrane. It catalyses the reaction Zn(2+)(in) + 2 H(+)(out) = Zn(2+)(out) + 2 H(+)(in). In terms of biological role, together with SLC30A6 forms a functional proton-coupled zinc ion antiporter mediating zinc entry into the lumen of organelles along the secretory pathway. By contributing to zinc ion homeostasis within the early secretory pathway, regulates the activation and folding of enzymes like alkaline phosphatases and enzymes involved in phosphatidylinositol glycan anchor biosynthesis. Through the transport of zinc into secretory granules of pancreatic beta-cells, plays an important role in the storage and secretion of insulin. Zinc ion:proton antiporter mediating influx and efflux of zinc at the plasma membrane. This chain is Proton-coupled zinc antiporter SLC30A5, found in Homo sapiens (Human).